The following is a 90-amino-acid chain: Elongation factor 1-beta (90 aa).

The protein belongs to the EF-1-beta/EF-1-delta family.

In terms of biological role, promotes the exchange of GDP for GTP in EF-1-alpha/GDP, thus allowing the regeneration of EF-1-alpha/GTP that could then be used to form the ternary complex EF-1-alpha/GTP/AAtRNA. In Aeropyrum pernix (strain ATCC 700893 / DSM 11879 / JCM 9820 / NBRC 100138 / K1), this protein is Elongation factor 1-beta (ef1b).